The sequence spans 259 residues: Glutathione S-transferase domain-containing protein DDB_G0274705 (259 aa).

The GST N-terminal domain occupies 7 to 96 (KIDYIFYTNN…YLAQKFNTFL (90 aa)). One can recognise a GST C-terminal domain in the interval 102-232 (NPLENSEVIT…GFKNFNPSLL (131 aa)).

The protein belongs to the GST superfamily.

This Dictyostelium discoideum (Social amoeba) protein is Glutathione S-transferase domain-containing protein DDB_G0274705.